We begin with the raw amino-acid sequence, 562 residues long: MELAVGAGGMRRSASHTSLSESDDFDLSRLLNKPRINVERQRSFDDRSLSDVSYSGGGHGGTRGGFDGMYSPGGGLRSLVGTPASSALHSFEPHPIVGDAWEALRRSLVFFRGQPLGTIAAFDHASEEVLNYDQVFVRDFVPSALAFLMNGEPEIVRHFLLKTLLLQGWEKKVDRFKLGEGAMPASFKVLHDSKKGVDTLHADFGESAIGRVAPVDSGFWWIILLRAYTKSTGDLTLAETPECQKGMRLILSLCLSEGFDTFPTLLCADGCCMIDRRMGVYGYPIEIQALFFMALRCALQLLKHDNEGKEFVERIATRLHALSYHMRSYYWLDFQQLNDIYRYKTEEYSHTAVNKFNVIPDSIPDWLFDFMPCQGGFFIGNVSPARMDFRWFALGNMIAILSSLATPEQSTAIMDLIEERWEELIGEMPLKICYPAIENHEWRIVTGCDPKNTRWSYHNGGSWPVLLWLLTAACIKTGRPQIARRAIDLAERRLLKDGWPEYYDGKLGRYVGKQARKFQTWSIAGYLVAKMMLEDPSHLGMISLEEDKAMKPVLKRSASWTN.

Belongs to the glycosyl hydrolase 100 family.

Its subcellular location is the cytoplasm. The protein resides in the cytosol. The catalysed reaction is Hydrolysis of terminal non-reducing beta-D-fructofuranoside residues in beta-D-fructofuranosides.. Its function is as follows. Cytosolic invertase that cleaves sucrose into glucose and fructose and is involved in the regulation of primary root elongation, lateral root formation, floral transition and pollen development. The chain is Cytosolic invertase 1 from Oryza sativa subsp. japonica (Rice).